Consider the following 340-residue polypeptide: Organic solute transporter subunit alpha (340 aa).

The Extracellular portion of the chain corresponds to 1-48 (MEPGRTHIKLDPRYTAELLELLETNYSISPACFSHPPTAAQLLRALGP). N-linked (GlcNAc...) asparagine glycosylation is present at Asn-25. Residues 49 to 69 (VDIALTIILTFLTTGSVAIFL) traverse the membrane as a helical segment. Residues 70–87 (EDAVYLYKNTLCPIKKRT) are Cytoplasmic-facing. The chain crosses the membrane as a helical span at residues 88-108 (LIWSSSAPTVVSVFCCFGLWI). The Extracellular segment spans residues 109-114 (PRALTL). Residues 115 to 135 (VEMAITSFYAVCFYLLMMVMV) traverse the membrane as a helical segment. The Cytoplasmic portion of the chain corresponds to 136–181 (EGFGGKKAVLRTLKDTPMRVHTGPCCCCCPCCPPLILTRKKLQLLL). Residues 182–202 (LGPFQYAFFKITLSIVGLFLI) form a helical membrane-spanning segment. The Extracellular portion of the chain corresponds to 203–219 (PDGIYDPGEISEKSAAL). The helical transmembrane segment at 220 to 240 (WINNLLAVSTLLALWSLAILF) threads the bilayer. The Cytoplasmic segment spans residues 241–255 (RQAKMHLGEQNMGSK). The chain crosses the membrane as a helical span at residues 256 to 276 (FALFQVLVILTALQPAIFSIL). Residues 277–297 (ANSGQIACSPPYSSKIRSQVM) lie on the Extracellular side of the membrane. Residues 298 to 317 (NCHMLILETFLMTVLTRMYY) form a helical membrane-spanning segment. The Cytoplasmic portion of the chain corresponds to 318–340 (RRKDDKVGYEACSLPDLDSALKA). Ser-330 is modified (phosphoserine).

It belongs to the OST-alpha family. Interacts with SLC51B. The Ost-alpha/Ost-beta complex is a heterodimer composed of alpha (SLC51A) and beta (SLC51B) subunit. Post-translationally, N-glycosylated. In terms of tissue distribution, present at high levels in ileum. In ileum, it is restricted to the apical domain on the mature villus enterocytes with little detectable expression in the goblet cells or crypt enterocytes (at protein level). Expressed in kidney but not in heart, brain, liver, spleen, embryo, lung, thymus, ovary nor testis.

The protein resides in the cell membrane. The protein localises to the endoplasmic reticulum membrane. It carries out the reaction taurocholate(out) = taurocholate(in). The catalysed reaction is tauroursodeoxycholate(out) = tauroursodeoxycholate(in). The enzyme catalyses glycoursodeoxycholate(out) = glycoursodeoxycholate(in). It catalyses the reaction glycocholate(out) = glycocholate(in). It carries out the reaction taurochenodeoxycholate(out) = taurochenodeoxycholate(in). The catalysed reaction is glycochenodeoxycholate(out) = glycochenodeoxycholate(in). The enzyme catalyses taurodeoxycholate(out) = taurodeoxycholate(in). It catalyses the reaction glycodeoxycholate(out) = glycodeoxycholate(in). It carries out the reaction prostaglandin E2(out) = prostaglandin E2(in). The catalysed reaction is estrone 3-sulfate(out) = estrone 3-sulfate(in). The enzyme catalyses dehydroepiandrosterone 3-sulfate(out) = dehydroepiandrosterone 3-sulfate(in). In terms of biological role, essential component of the Ost-alpha/Ost-beta complex, a heterodimer that acts as the intestinal basolateral transporter responsible for bile acid export from enterocytes into portal blood. Efficiently transports the major species of bile acids (taurocholate). Taurine conjugates are transported more efficiently across the basolateral membrane than glycine-conjugated bile acids. Can also transport steroids such as estrone 3-sulfate and dehydroepiandrosterone 3-sulfate, therefore playing a role in the enterohepatic circulation of sterols. Able to transport eicosanoids such as prostaglandin E2. This is Organic solute transporter subunit alpha (Slc51a) from Mus musculus (Mouse).